A 188-amino-acid chain; its full sequence is ADP-ribosylation factor K (188 aa).

Residues 34-40 (DGAGKST), 75-79 (DVGGQ), and 134-137 (NKQD) each bind GTP.

The protein belongs to the small GTPase superfamily. Arf family.

Its subcellular location is the golgi apparatus. In terms of biological role, GTP-binding protein that may be involved in protein trafficking. May modulate vesicle budding and uncoating within the Golgi apparatus. The chain is ADP-ribosylation factor K (arrK) from Dictyostelium discoideum (Social amoeba).